The following is a 206-amino-acid chain: Small ribosomal subunit protein uS4 (206 aa).

The S4 RNA-binding domain maps to 98–155; it reads TRLDNVVYRLGWALSRAQARQIVSHGKIAVNGKRVNIPSYNLKPGDVVELLDKDLIPV.

Belongs to the universal ribosomal protein uS4 family. In terms of assembly, part of the 30S ribosomal subunit. Contacts protein S5. The interaction surface between S4 and S5 is involved in control of translational fidelity.

Its function is as follows. One of the primary rRNA binding proteins, it binds directly to 16S rRNA where it nucleates assembly of the body of the 30S subunit. With S5 and S12 plays an important role in translational accuracy. This is Small ribosomal subunit protein uS4 from Dictyoglomus turgidum (strain DSM 6724 / Z-1310).